Consider the following 191-residue polypeptide: Flagellar transcriptional regulator FlhC (191 aa).

Zn(2+) is bound by residues C139, C142, C159, and C162.

Belongs to the FlhC family. As to quaternary structure, heterohexamer composed of two FlhC and four FlhD subunits. Each FlhC binds a FlhD dimer, forming a heterotrimer, and a hexamer assembles by dimerization of two heterotrimers. Zn(2+) serves as cofactor.

Its subcellular location is the cytoplasm. Functions in complex with FlhD as a master transcriptional regulator that regulates transcription of several flagellar and non-flagellar operons by binding to their promoter region. Activates expression of class 2 flagellar genes, including fliA, which is a flagellum-specific sigma factor that turns on the class 3 genes. Also regulates genes whose products function in a variety of physiological pathways. The polypeptide is Flagellar transcriptional regulator FlhC (Enterobacter cloacae subsp. cloacae (strain ATCC 13047 / DSM 30054 / NBRC 13535 / NCTC 10005 / WDCM 00083 / NCDC 279-56)).